The sequence spans 158 residues: Protein-export protein SecB (158 aa).

The protein belongs to the SecB family. As to quaternary structure, homotetramer, a dimer of dimers. One homotetramer interacts with 1 SecA dimer.

The protein localises to the cytoplasm. Functionally, one of the proteins required for the normal export of preproteins out of the cell cytoplasm. It is a molecular chaperone that binds to a subset of precursor proteins, maintaining them in a translocation-competent state. It also specifically binds to its receptor SecA. This chain is Protein-export protein SecB, found in Yersinia pestis (strain Pestoides F).